Consider the following 1271-residue polypeptide: DNA-directed RNA polymerase subunit beta (1271 aa).

Belongs to the RNA polymerase beta chain family. The RNAP catalytic core consists of 2 alpha, 1 beta, 1 beta' and 1 omega subunit. When a sigma factor is associated with the core the holoenzyme is formed, which can initiate transcription.

The catalysed reaction is RNA(n) + a ribonucleoside 5'-triphosphate = RNA(n+1) + diphosphate. Its function is as follows. DNA-dependent RNA polymerase catalyzes the transcription of DNA into RNA using the four ribonucleoside triphosphates as substrates. The chain is DNA-directed RNA polymerase subunit beta from Acholeplasma laidlawii (strain PG-8A).